Consider the following 354-residue polypeptide: S-adenosylmethionine:tRNA ribosyltransferase-isomerase (354 aa).

It belongs to the QueA family. As to quaternary structure, monomer.

It localises to the cytoplasm. It catalyses the reaction 7-aminomethyl-7-carbaguanosine(34) in tRNA + S-adenosyl-L-methionine = epoxyqueuosine(34) in tRNA + adenine + L-methionine + 2 H(+). It functions in the pathway tRNA modification; tRNA-queuosine biosynthesis. Transfers and isomerizes the ribose moiety from AdoMet to the 7-aminomethyl group of 7-deazaguanine (preQ1-tRNA) to give epoxyqueuosine (oQ-tRNA). This is S-adenosylmethionine:tRNA ribosyltransferase-isomerase from Salmonella heidelberg (strain SL476).